The chain runs to 366 residues: Fructose-bisphosphate aldolase 2 (366 aa).

Positions 60 and 150 each coordinate substrate. Glu-191 acts as the Proton acceptor in catalysis. The Schiff-base intermediate with dihydroxyacetone-P role is filled by Lys-233.

It belongs to the class I fructose-bisphosphate aldolase family.

It catalyses the reaction beta-D-fructose 1,6-bisphosphate = D-glyceraldehyde 3-phosphate + dihydroxyacetone phosphate. The protein operates within carbohydrate degradation; glycolysis; D-glyceraldehyde 3-phosphate and glycerone phosphate from D-glucose: step 4/4. The protein is Fructose-bisphosphate aldolase 2 (aldo-2) of Caenorhabditis elegans.